Consider the following 278-residue polypeptide: Serine/threonine-protein phosphatase PGAM5, mitochondrial (278 aa).

A helical transmembrane segment spans residues 7–27 (LIAGGSAAAAAAAILGAAAVG).

Belongs to the phosphoglycerate mutase family. BPG-dependent PGAM subfamily. Phosphorylated by the RIPK1/RIPK3 complex under necrotic conditions. This phosphorylation increases PGAM5 phosphatase activity.

The protein resides in the mitochondrion outer membrane. It carries out the reaction O-phospho-L-seryl-[protein] + H2O = L-seryl-[protein] + phosphate. The enzyme catalyses O-phospho-L-threonyl-[protein] + H2O = L-threonyl-[protein] + phosphate. Displays phosphatase activity for serine/threonine residues. Has apparently no phosphoglycerate mutase activity. May be regulator of mitochondrial dynamics. May be a central mediator for programmed necrosis. The sequence is that of Serine/threonine-protein phosphatase PGAM5, mitochondrial (pgam5) from Xenopus tropicalis (Western clawed frog).